A 92-amino-acid chain; its full sequence is Small ribosomal subunit protein uS19c (92 aa).

Belongs to the universal ribosomal protein uS19 family.

The protein resides in the plastid. It localises to the chloroplast. Functionally, protein S19 forms a complex with S13 that binds strongly to the 16S ribosomal RNA. This is Small ribosomal subunit protein uS19c (rps19) from Guillardia theta (Cryptophyte).